A 154-amino-acid polypeptide reads, in one-letter code: Protein AE7-like 1 (154 aa).

Belongs to the MIP18 family.

In terms of biological role, may play a role in chromosome segregation through establishment of sister chromatid cohesion. Unable to complement ae7 mutants, and thus probably not involved in the cytosolic iron-sulfur assembly (CIA) pathway. The sequence is that of Protein AE7-like 1 from Arabidopsis thaliana (Mouse-ear cress).